We begin with the raw amino-acid sequence, 190 residues long: Vacuolar protein sorting-associated protein 29 (190 aa).

It belongs to the VPS29 family. As to quaternary structure, component of the retromer complex which consists of VPS29 (MAG1), VPS26 (VPS26A or VPS26B), VPS35 (VPS35A or VPS35B or VPS35C), VPS5/17 (SNX1 or SNX2A or SNX2B). Component of a retromer subcomplex consisting of VPS29 (MAG1), VPS26 (VPS26A or VPS26B), VPS35 (VPS35A or VPS35B or VPS35C).

Its subcellular location is the cytoplasm. The protein resides in the endosome membrane. It is found in the prevacuolar compartment membrane. The protein localises to the golgi apparatus. It localises to the trans-Golgi network membrane. Its subcellular location is the late endosome membrane. Functionally, plays a role in vesicular protein sorting. Component of the membrane-associated retromer complex which is essential in endosome-to-Golgi retrograde transport. Required for the auxin-carrier protein PIN2 sorting to the lytic vacuolar pathway and the PIN1 recycling to the plasma membrane, thus influencing auxin transport orientation. Also involved in the efficient sorting of seed storage proteins globulin 12S and albumin 2S. The VPS29-VPS26-VPS35 subcomplex may be involved in recycling of specific cargos from endosome to the plasma membrane. The polypeptide is Vacuolar protein sorting-associated protein 29 (Arabidopsis thaliana (Mouse-ear cress)).